The sequence spans 352 residues: Alpha-2-HS-glycoprotein (352 aa).

The signal sequence occupies residues 1–18; sequence MKSLVLLLCFAQLWSCQS. The region spanning 19-133 is the Cystatin fetuin-A-type 1 domain; the sequence is APQGAGLGFR…QFRVLHAQCH (115 aa). 6 disulfide bridges follow: C32–C343, C89–C100, C114–C132, C146–C149, C208–C219, and C230–C247. A glycan (N-linked (GlcNAc...) asparagine) is linked at N99. A Phosphoserine modification is found at S134. Residue T135 is modified to Phosphothreonine. S138 bears the Phosphoserine mark. The region spanning 144–250 is the Cystatin fetuin-A-type 2 domain; it reads KFCPRCPILI…EEVSVACKLF (107 aa). Residues N156 and N176 are each glycosylated (N-linked (GlcNAc...) asparagine). Low complexity predominate over residues 256–273; that stretch reads PANANPAGPAPTVGQAAP. The disordered stretch occupies residues 256-280; that stretch reads PANANPAGPAPTVGQAAPVAPPAGP. S309, S313, S316, and S318 each carry phosphoserine. The interval 319–338 is disordered; the sequence is GEVLHSPKVGQPGDAGAAGP. The segment covering 328-338 has biased composition (low complexity); that stretch reads GQPGDAGAAGP.

The protein belongs to the fetuin family. In terms of processing, undergoes complex post-translational modification involving N-glycosylation, and addition of fucose and sialic acid residues. Phosphorylation occurs at a serine residue. Phosphorylated by FAM20C in the extracellular medium. As to expression, synthesized in liver and secreted by the hepatocytes in the blood.

It localises to the secreted. Its function is as follows. Could inhibit both insulin-receptor tyrosine kinase activity and insulin-stimulated receptor autophosphorylation and, concomitantly, antagonize the mitogenic effect of the hormone in cultured rat hepatoma cells. The polypeptide is Alpha-2-HS-glycoprotein (Ahsg) (Rattus norvegicus (Rat)).